The primary structure comprises 342 residues: Prenyl transferase ptmC (342 aa).

A helical membrane pass occupies residues 17–37; that stretch reads LSFLTLTVGALALIVVLYISI. H110 is an isopentenyl diphosphate binding site. Positions 117 and 121 each coordinate Mg(2+). R126 lines the dimethylallyl diphosphate pocket. N154 carries N-linked (GlcNAc...) asparagine glycosylation. Positions 210, 211, 240, 247, and 257 each coordinate dimethylallyl diphosphate.

It belongs to the FPP/GGPP synthase family.

The protein resides in the membrane. The protein operates within secondary metabolite biosynthesis. Prenyl transferase; part of the gene cluster that mediates the biosynthesis of the indole diterpenes penitrems. The geranylgeranyl diphosphate (GGPP) synthase ptmG catalyzes the first step in penitrem biosynthesis via conversion of farnesyl pyrophosphate and isopentyl pyrophosphate into geranylgeranyl pyrophosphate (GGPP). Condensation of indole-3-glycerol phosphate with GGPP by the prenyl transferase ptmC then forms 3-geranylgeranylindole (3-GGI). Epoxidation by the FAD-dependent monooxygenase ptmM leads to a epoxidized-GGI that is substrate of the terpene cyclase ptmB for cyclization to yield paspaline. Paspaline is subsequently converted to 13-desoxypaxilline by the cytochrome P450 monooxygenase ptmP, the latter being then converted to paxilline by the cytochrome P450 monooxygenase ptmQ. Paxilline is converted to beta-paxitriol via C-10 ketoreduction by the short-chain dehydrogenase ptmH which can be monoprenylated at the C-20 by the indole diterpene prenyltransferase ptmD. A two-step elimination (acetylation and elimination) process performed by the O-acetyltransferase ptmV and ptmI leads to the production of the prenylated form of penijanthine. The FAD-linked oxidoreductase ptmO then converts the prenylated form of penijanthine into PC-M5 which is in turn transformed into PC-M4 by the aromatic dimethylallyltransferase ptmE. Five sequential oxidative transformations performed by the cytochrome P450 monooxygenases ptmK, ptmU, ptmL, ptmN and ptmJ yield the various penitrem compounds. PtmK, ptmU and ptmM are involved in the formation of the key bicyclic ring of penitrem C via the formation of the intermediates secopenitrem D and penitrem D. PtmL catalyzes the epoxidation of penitrem D and C to yield penitrem B and F, respectively. PtmJ catalyzes the last benzylic hydroxylation to convert penitrem B to prenitrem E and penitrem F to penitrem A. This Penicillium ochrochloron protein is Prenyl transferase ptmC.